The primary structure comprises 330 residues: Global transcription regulator sge1 (330 aa).

2 disordered regions span residues 93–123 and 239–306; these read PPGE…RNSV and QYAP…HQPQ. Positions 105–114 are enriched in polar residues; that stretch reads GKSTTQSGGI. Low complexity predominate over residues 250-306; sequence QQPALQQQPQQQPQPQHQPQLQYQPQPHQHQPQLQYQPQQQHQPQQQYRPQPQHQPQ.

The protein belongs to the MIT1/WOR1 family.

The protein localises to the nucleus. Functionally, global transcriptional regulator of pathogenicity. Acts as an activator of parasitic growth. Not essential for colonization or penetration of the root surface, but required for expression of genes encoding effectors that are secreted during infection. Involved in conidiogenesis, but is not required for conidial fitness, overall (colony) morphology, vegetative growth or carbon source utilization. The polypeptide is Global transcription regulator sge1 (Fusarium oxysporum f. sp. lycopersici (strain 4287 / CBS 123668 / FGSC 9935 / NRRL 34936) (Fusarium vascular wilt of tomato)).